The primary structure comprises 715 residues: METAEKECGALGGLFQAIVNDMKSSYPIWEDFNSKAAKLHSQLRTTVLAAVAFLDAFQKVADMATNTRGATRDIGSALTRMCMRHRSIETKLRQFTNALLESLINPLQERIEDWKKSANQLDKDHAKEYKRARHEIKKKSSDTLKLQKKARKGKGDLQPQLDSALQDVNDMYLLLEETEKQAVRRALIEERGRFCTFITFLQPVVNGELTMLGEITHLQGIIDDLVVLTADPHKLPPASEQVIKDLKGSDYSWSYQTPPSSPSSSNSRKSSMCSLAQPATTRLSSVSSHDSGFVSQDPTYSKPPSPMPSDITSQKSSSSASSEASETCQSVSECSSPTSDWTKAGPHEQPSATTLQRRKDRVEHLRDTEPGPTGGGTVGSSGEEVPRTRMSPATIAAKHGEEVSPAASDLAMVLTRGLSLEHQKSSRDSLQYSSGYSTQTTTPSCSEDTIPSQGSDYDCYSVNGDADSEGPPEFDKSSTIPRNSNIAQNYRRLIQTKRPASTAGLPTAGLPTAMGLPSGAPPGVATIRRTPSTKPTVRRALSSAGPIPIRPPIVPVKTPTVPDSPGYVGPTRAGSEECVFYTDEVASPLAPDLAKASPKRLSLPNTAWGSQSPEVASYGGGAAVGLATEDEEQQLAANRHSLVEKLGELVAGAHALGEGQFPFPTALSATPSEETPTPPPAATSDPPAEDMLVAIRRGVRLRRTVTNDRSAPRIL.

Residues 1-249 (METAEKECGA…EQVIKDLKGS (249 aa)) enclose the IMD domain. A coiled-coil region spans residues 134–156 (HEIKKKSSDTLKLQKKARKGKGD). 3 stretches are compositionally biased toward low complexity: residues 253–274 (WSYQ…SMCS), 284–295 (SSVSSHDSGFVS), and 312–330 (TSQK…TCQS). Disordered stretches follow at residues 253-405 (WSYQ…EVSP), 420-485 (LEHQ…RNSN), and 527-562 (IRRT…PTVP). At threonine 257 the chain carries Phosphothreonine. The residue at position 261 (serine 261) is a Phosphoserine. Over residues 331-341 (VSECSSPTSDW) the composition is skewed to polar residues. Residues 360-369 (DRVEHLRDTE) show a composition bias toward basic and acidic residues. A Phosphoserine modification is found at serine 404. Positions 429-442 (SLQYSSGYSTQTTT) are enriched in low complexity. Residues 443-455 (PSCSEDTIPSQGS) show a composition bias toward polar residues. 6 positions are modified to phosphoserine: serine 542, serine 564, serine 575, serine 587, serine 597, and serine 602. Threonine 606 is subject to Phosphothreonine. Residues 661 to 690 (FPFPTALSATPSEETPTPPPAATSDPPAED) are disordered. Residues 687 to 704 (PAEDMLVAIRRGVRLRRT) form the WH2 domain.

It belongs to the MTSS family. Interacts (via IMD domain) with RAC1; this interaction may be important to potentiate PDGF-induced RAC1 activation.

The protein resides in the cytoplasm. It is found in the cell projection. The protein localises to the ruffle. Involved in plasma membrane dynamics. Potentiated PDGF-mediated formation of membrane ruffles and lamellipodia in fibroblasts, acting via RAC1 activation. May function in actin bundling. The chain is Protein MTSS 2 (Mtss2) from Mus musculus (Mouse).